Reading from the N-terminus, the 393-residue chain is (S)-mandelate dehydrogenase (393 aa).

Positions 1 to 377 (MSQNLFNVED…SPDYLQNEGV (377 aa)) constitute an FMN hydroxy acid dehydrogenase domain. Tyr26 is a binding site for (S)-mandelate. FMN-binding positions include 79-81 (PTG), Ser108, and Gln129. Tyr131 is a (S)-mandelate binding site. An FMN-binding site is contributed by Thr156. Position 165 (Arg165) interacts with (S)-mandelate. Residue Lys250 participates in FMN binding. The (S)-mandelate site is built by His274 and Arg277. Residue His274 is the Proton acceptor of the active site. Residues 303-307 (DSGFR) and 326-327 (GR) contribute to the FMN site.

Belongs to the FMN-dependent alpha-hydroxy acid dehydrogenase family. In terms of assembly, homotetramer. Requires FMN as cofactor.

Its subcellular location is the cell inner membrane. The catalysed reaction is (S)-mandelate + A = phenylglyoxylate + AH2. The protein operates within aromatic compound metabolism; (R)-mandelate degradation; benzoate from (R)-mandelate: step 2/4. Catalyzes the dehydrogenation of (S)-mandelate to phenylglyoxylate (benzoylformate). Is likely involved in the utilization of mandelate as a sole source of carbon and energy for growth. Active in vitro with the artificial electron acceptors 2,6-dichlorophenolindophenol (DCPIP) or ferricyanide, but in vivo most likely transfer the electron pair from the reduced flavin to a component of the electron transport chain in the membrane, possibly a quinone. Shows very low activity with oxygen as the electron acceptor, and also with 3-indolelactate and medium chain 2-hydroxyacids as substrates. This chain is (S)-mandelate dehydrogenase, found in Pseudomonas putida (Arthrobacter siderocapsulatus).